Reading from the N-terminus, the 141-residue chain is Large ribosomal subunit protein uL11 (141 aa).

Belongs to the universal ribosomal protein uL11 family. Part of the ribosomal stalk of the 50S ribosomal subunit. Interacts with L10 and the large rRNA to form the base of the stalk. L10 forms an elongated spine to which L12 dimers bind in a sequential fashion forming a multimeric L10(L12)X complex. Post-translationally, one or more lysine residues are methylated.

Its function is as follows. Forms part of the ribosomal stalk which helps the ribosome interact with GTP-bound translation factors. The polypeptide is Large ribosomal subunit protein uL11 (Chlorobium luteolum (strain DSM 273 / BCRC 81028 / 2530) (Pelodictyon luteolum)).